We begin with the raw amino-acid sequence, 1242 residues long: ATP-dependent helicase/nuclease subunit A (1242 aa).

A UvrD-like helicase ATP-binding domain is found at 12–487 (SRWTDEQWKA…IDLASNFRSR (476 aa)). 33-40 (AAAGSGKT) serves as a coordination point for ATP. A UvrD-like helicase C-terminal domain is found at 514–808 (AAQLKYGADY…RVMTIHSSKG (295 aa)).

Belongs to the helicase family. AddA subfamily. In terms of assembly, heterodimer of AddA and AddB/RexB. It depends on Mg(2+) as a cofactor.

The catalysed reaction is Couples ATP hydrolysis with the unwinding of duplex DNA by translocating in the 3'-5' direction.. The enzyme catalyses ATP + H2O = ADP + phosphate + H(+). The heterodimer acts as both an ATP-dependent DNA helicase and an ATP-dependent, dual-direction single-stranded exonuclease. Recognizes the chi site generating a DNA molecule suitable for the initiation of homologous recombination. The AddA nuclease domain is required for chi fragment generation; this subunit has the helicase and 3' -&gt; 5' nuclease activities. In Geobacillus thermodenitrificans (strain NG80-2), this protein is ATP-dependent helicase/nuclease subunit A.